The primary structure comprises 335 residues: Probable calcium-binding protein CML49 (335 aa).

The span at 1–10 (MSGYPPSSQG) shows a compositional bias: low complexity. A disordered region spans residues 1–154 (MSGYPPSSQG…PQASYGSPFA (154 aa)). A compositionally biased stretch (pro residues) spans 30–45 (NPPPYGSSGSNPPPPY). The segment covering 46–63 (GSSASSPYAVPYGAQPAP) has biased composition (low complexity). Residues 110–141 (DYGGYGGAPQQSGHGGGYGGAPQQSGHGGGYG) are compositionally biased toward gly residues. EF-hand domains follow at residues 164 to 199 (GTDP…YNQS) and 230 to 265 (FSLQ…LGFS). 9 residues coordinate Ca(2+): D177, D179, S181, E188, D243, D245, S247, R249, and E254.

Its function is as follows. Potential calcium sensor. This chain is Probable calcium-binding protein CML49 (CML49), found in Arabidopsis thaliana (Mouse-ear cress).